A 106-amino-acid chain; its full sequence is Large ribosomal subunit protein P1 (106 aa).

The span at 66 to 76 (AQPQATQAQPA) shows a compositional bias: low complexity. The segment at 66 to 106 (AQPQATQAQPAAEEKKEEKKEEEKKGPSEEEIASGLASLFG) is disordered. The span at 77–93 (AEEKKEEKKEEEKKGPS) shows a compositional bias: basic and acidic residues.

The protein belongs to the eukaryotic ribosomal protein P1/P2 family. As to quaternary structure, part of the 50S ribosomal subunit. Homodimer, it forms part of the ribosomal stalk which helps the ribosome interact with GTP-bound translation factors. Forms a heptameric uL10/P0(P1)2(P1)2(P1)2 complex, where uL10/P0 forms an elongated spine to which the P1 dimers bind in a sequential fashion.

Forms part of the ribosomal stalk, playing a central role in the interaction of the ribosome with GTP-bound translation factors. This chain is Large ribosomal subunit protein P1, found in Saccharolobus solfataricus (strain ATCC 35092 / DSM 1617 / JCM 11322 / P2) (Sulfolobus solfataricus).